The chain runs to 207 residues: Coenzyme Q-binding protein COQ10, mitochondrial (207 aa).

Residues 1–39 (MVLIIRPSQTLILFRKAMLKPIGRYPLKRNFFGLSGTNH) constitute a mitochondrion transit peptide.

This sequence belongs to the COQ10 family. As to quaternary structure, interacts with coenzyme Q.

Its subcellular location is the mitochondrion inner membrane. In terms of biological role, required for the function of coenzyme Q in the respiratory chain. May serve as a chaperone or may be involved in the transport of Q6 from its site of synthesis to the catalytic sites of the respiratory complexes. The protein is Coenzyme Q-binding protein COQ10, mitochondrial (COQ10) of Saccharomyces cerevisiae (strain ATCC 204508 / S288c) (Baker's yeast).